The sequence spans 473 residues: Aspartyl/glutamyl-tRNA(Asn/Gln) amidotransferase subunit B (473 aa).

The protein belongs to the GatB/GatE family. GatB subfamily. Heterotrimer of A, B and C subunits.

It catalyses the reaction L-glutamyl-tRNA(Gln) + L-glutamine + ATP + H2O = L-glutaminyl-tRNA(Gln) + L-glutamate + ADP + phosphate + H(+). The enzyme catalyses L-aspartyl-tRNA(Asn) + L-glutamine + ATP + H2O = L-asparaginyl-tRNA(Asn) + L-glutamate + ADP + phosphate + 2 H(+). Its function is as follows. Allows the formation of correctly charged Asn-tRNA(Asn) or Gln-tRNA(Gln) through the transamidation of misacylated Asp-tRNA(Asn) or Glu-tRNA(Gln) in organisms which lack either or both of asparaginyl-tRNA or glutaminyl-tRNA synthetases. The reaction takes place in the presence of glutamine and ATP through an activated phospho-Asp-tRNA(Asn) or phospho-Glu-tRNA(Gln). The polypeptide is Aspartyl/glutamyl-tRNA(Asn/Gln) amidotransferase subunit B (Wolbachia sp. subsp. Drosophila simulans (strain wRi)).